The primary structure comprises 250 residues: Flavin-dependent thymidylate synthase (250 aa).

One can recognise a ThyX domain in the interval 7–233 (LRVQLIAKTE…PAVFADFEVT (227 aa)). DUMP-binding positions include 92–95 (ELIR), 103–107 (QLSQR), and arginine 172. Residues 95–97 (RHR) and glutamine 103 each bind FAD. The ThyX motif signature appears at 95-105 (RHRHFSYSQLS). FAD is bound by residues 188–190 (NYR) and histidine 194. Residue arginine 199 participates in dUMP binding. The active-site Involved in ionization of N3 of dUMP, leading to its activation is the arginine 199.

Belongs to the thymidylate synthase ThyX family. In terms of assembly, homotetramer. FAD is required as a cofactor.

It catalyses the reaction dUMP + (6R)-5,10-methylene-5,6,7,8-tetrahydrofolate + NADPH + H(+) = dTMP + (6S)-5,6,7,8-tetrahydrofolate + NADP(+). It participates in pyrimidine metabolism; dTTP biosynthesis. Functionally, catalyzes the reductive methylation of 2'-deoxyuridine-5'-monophosphate (dUMP) to 2'-deoxythymidine-5'-monophosphate (dTMP) while utilizing 5,10-methylenetetrahydrofolate (mTHF) as the methyl donor, and NADPH and FADH(2) as the reductant. The polypeptide is Flavin-dependent thymidylate synthase (Mycobacterium marinum (strain ATCC BAA-535 / M)).